Here is a 142-residue protein sequence, read N- to C-terminus: MEPFVITASECDCNSAHSSRVSKDGYALSDELSNETMFLTQVKYIFEGEEDHIDDNTMQEINTDIVNVVIVELDETLEIKNVELISDEYQLLGFSNDADNDLNLTILSEFPADVSPGTRDLGKLVTRYQHQNKHLKHMLQEL.

Its subcellular location is the cytoplasm. The protein localises to the cytoskeleton. It is found in the preautophagosomal structure. Its function is as follows. Plays a role in starvation-induced autophagy. Involved in mitophagy. Functions with ATG17 and ATG29 at the preautophagosomal structure (PAS) in order to form normal autophagosomes under starvation conditions. May be involved in microtubule function, such as chromosome segregation and karyogamy. This Eremothecium gossypii (strain ATCC 10895 / CBS 109.51 / FGSC 9923 / NRRL Y-1056) (Yeast) protein is Autophagy-related protein 31 (CIS1).